A 154-amino-acid chain; its full sequence is NADPH-dependent 7-cyano-7-deazaguanine reductase (154 aa).

C52 serves as the catalytic Thioimide intermediate. The active-site Proton donor is D59. Substrate is bound by residues V74–S76 and H93–E94.

The protein belongs to the GTP cyclohydrolase I family. QueF type 1 subfamily.

The protein localises to the cytoplasm. The catalysed reaction is 7-aminomethyl-7-carbaguanine + 2 NADP(+) = 7-cyano-7-deazaguanine + 2 NADPH + 3 H(+). It functions in the pathway tRNA modification; tRNA-queuosine biosynthesis. In terms of biological role, catalyzes the NADPH-dependent reduction of 7-cyano-7-deazaguanine (preQ0) to 7-aminomethyl-7-deazaguanine (preQ1). The protein is NADPH-dependent 7-cyano-7-deazaguanine reductase of Paracoccus denitrificans (strain Pd 1222).